Consider the following 255-residue polypeptide: MIDLQEILANMNPNQKINYDRVMQQMAKVWEKESVRPSILMHVCCAPCSTYTLEYLTQFADITVYFANSNIHPKDEYHRRAYVTQQFVSEFNAKTGNTVQFLEADYVPNEYVRQVRGLEEEPEGGDRCRVCFDYRLDKTAQKAVELGFDYFASALTISPHKNSQTINDVGIDVQKVYTTKYLPSDFKKNNGYRRSVEMCEEYDIYRQCYCGCVYAAKMQGIDLVQVKKDAKAFMADKDLDNDFTHIRFSYRGDEM.

[4Fe-4S] cluster is bound by residues C44, C45, C128, and C131. The cysteines at positions 210 and 212 are disulfide-linked.

This sequence belongs to the QueH family.

It catalyses the reaction epoxyqueuosine(34) in tRNA + AH2 = queuosine(34) in tRNA + A + H2O. The protein operates within tRNA modification; tRNA-queuosine biosynthesis. Catalyzes the conversion of epoxyqueuosine (oQ) to queuosine (Q), which is a hypermodified base found in the wobble positions of tRNA(Asp), tRNA(Asn), tRNA(His) and tRNA(Tyr). This chain is Epoxyqueuosine reductase QueH, found in Streptococcus pyogenes serotype M1.